Here is a 358-residue protein sequence, read N- to C-terminus: Neutral protease 2 homolog MEP8 (358 aa).

The N-terminal stretch at 1–19 (MKLSSILLALAALVSPAFS) is a signal peptide. A propeptide spanning residues 20-179 (YAISHLPRSE…EKAIKPVDKR (160 aa)) is cleaved from the precursor. 2 disulfides stabilise this stretch: Cys186–Cys256 and Cys263–Cys281. His305 serves as a coordination point for Zn(2+). Glu306 is a catalytic residue. 2 residues coordinate Zn(2+): His309 and Asp320.

This sequence belongs to the peptidase M35 family. Requires Zn(2+) as cofactor.

The protein resides in the secreted. The enzyme catalyses Preferential cleavage of bonds with hydrophobic residues in P1'. Also 3-Asn-|-Gln-4 and 8-Gly-|-Ser-9 bonds in insulin B chain.. In terms of biological role, secreted metalloproteinase that allows assimilation of proteinaceous substrates. Shows high activities on basic nuclear substrates such as histone and protamine. May be involved in virulence. This chain is Neutral protease 2 homolog MEP8 (MEP8), found in Coccidioides posadasii (strain C735) (Valley fever fungus).